The following is a 253-amino-acid chain: Hydroxyacylglutathione hydrolase (253 aa).

7 residues coordinate Zn(2+): His-54, His-56, Asp-58, His-59, His-112, Asp-131, and His-169.

Belongs to the metallo-beta-lactamase superfamily. Glyoxalase II family. In terms of assembly, monomer. Requires Zn(2+) as cofactor.

It carries out the reaction an S-(2-hydroxyacyl)glutathione + H2O = a 2-hydroxy carboxylate + glutathione + H(+). The protein operates within secondary metabolite metabolism; methylglyoxal degradation; (R)-lactate from methylglyoxal: step 2/2. Thiolesterase that catalyzes the hydrolysis of S-D-lactoyl-glutathione to form glutathione and D-lactic acid. In Bartonella tribocorum (strain CIP 105476 / IBS 506), this protein is Hydroxyacylglutathione hydrolase.